A 310-amino-acid polypeptide reads, in one-letter code: Ornithine carbamoyltransferase (310 aa).

Carbamoyl phosphate contacts are provided by residues S58–T61, Q85, R109, and H136–Q139. Residues N167, D227, and S231–M232 contribute to the L-ornithine site. Residues C266–L267 and R294 each bind carbamoyl phosphate.

This sequence belongs to the aspartate/ornithine carbamoyltransferase superfamily. OTCase family.

The protein resides in the cytoplasm. It catalyses the reaction carbamoyl phosphate + L-ornithine = L-citrulline + phosphate + H(+). It functions in the pathway amino-acid biosynthesis; L-arginine biosynthesis; L-arginine from L-ornithine and carbamoyl phosphate: step 1/3. Its function is as follows. Reversibly catalyzes the transfer of the carbamoyl group from carbamoyl phosphate (CP) to the N(epsilon) atom of ornithine (ORN) to produce L-citrulline. The protein is Ornithine carbamoyltransferase of Rhodopseudomonas palustris (strain ATCC BAA-98 / CGA009).